The primary structure comprises 318 residues: L-lactate dehydrogenase (318 aa).

4 residues coordinate NAD(+): V14, D35, K40, and Y66. Substrate contacts are provided by residues R89 and 121 to 124 (NPVD). Residue S144 coordinates NAD(+). 149–152 (DTAR) provides a ligand contact to substrate. H176 serves as the catalytic Proton acceptor. Phosphotyrosine is present on Y220. Substrate is bound at residue T229.

It belongs to the LDH/MDH superfamily. LDH family. Homotetramer.

Its subcellular location is the cytoplasm. It catalyses the reaction (S)-lactate + NAD(+) = pyruvate + NADH + H(+). It functions in the pathway fermentation; pyruvate fermentation to lactate; (S)-lactate from pyruvate: step 1/1. Functionally, catalyzes the conversion of lactate to pyruvate. This Staphylococcus haemolyticus (strain JCSC1435) protein is L-lactate dehydrogenase.